The chain runs to 428 residues: Divalent metal cation transporter MntH (428 aa).

Transmembrane regions (helical) follow at residues 33–53 (WYLL…GNVA), 60–80 (AQFG…AALV), 114–134 (QAEI…AIAL), 136–156 (IMFN…SLLL), 171–191 (VITA…FVVT), 210–230 (SVLL…VYLH), 258–278 (VGLA…VAAL), 299–319 (TLGA…GLAS), 334–356 (LLHW…LAIL), 365–385 (TLVL…LPLV), and 406–426 (VGWV…YLTV).

This sequence belongs to the NRAMP family.

The protein localises to the cell membrane. Its function is as follows. H(+)-stimulated, divalent metal cation uptake system. Transports zinc and iron. Can also interact with manganese and copper. The protein is Divalent metal cation transporter MntH of Mycobacterium tuberculosis (strain CDC 1551 / Oshkosh).